A 701-amino-acid polypeptide reads, in one-letter code: Polyribonucleotide nucleotidyltransferase (701 aa).

Mg(2+) contacts are provided by D487 and D493. The region spanning 554–613 (PTMLAMKIDQDKIRDVIGKGGATIRAICEETKASIDIEDDGSIKIFGETKEAAEAAKQRV) is the KH domain. An S1 motif domain is found at 623–691 (GKIYVGKVER…NRGRIKLSIK (69 aa)).

Belongs to the polyribonucleotide nucleotidyltransferase family. Component of the RNA degradosome, which is a multiprotein complex involved in RNA processing and mRNA degradation. Mg(2+) is required as a cofactor.

Its subcellular location is the cytoplasm. The catalysed reaction is RNA(n+1) + phosphate = RNA(n) + a ribonucleoside 5'-diphosphate. Functionally, involved in mRNA degradation. Catalyzes the phosphorolysis of single-stranded polyribonucleotides processively in the 3'- to 5'-direction. The sequence is that of Polyribonucleotide nucleotidyltransferase from Stutzerimonas stutzeri (strain A1501) (Pseudomonas stutzeri).